The primary structure comprises 757 residues: Probable tRNA (uracil-O(2)-)-methyltransferase (757 aa).

Disordered regions lie at residues 55-93 (EARGPGTSAGSEQKERGPGPGQGSPGGGPGPRSLSGPEQ) and 108-138 (QQEEAQREAASVPLRDSGHPGHAEGREGDFP). The span at 72 to 84 (PGPGQGSPGGGPG) shows a compositional bias: gly residues. Serine 78 bears the Phosphoserine mark. The span at 123 to 136 (DSGHPGHAEGREGD) shows a compositional bias: basic and acidic residues. A Phosphoserine modification is found at serine 533. A C3H1-type zinc finger spans residues 713-743 (ACKTRLCWFFMHHPDGCALSTDCCPFAHGPA).

It belongs to the TRM44 family.

It is found in the cytoplasm. The enzyme catalyses uridine(44) in tRNA(Ser) + S-adenosyl-L-methionine = 2'-O-methyluridine(44) in tRNA(Ser) + S-adenosyl-L-homocysteine + H(+). Probable adenosyl-L-methionine (AdoMet)-dependent tRNA (uracil-O(2)-)-methyltransferase. In Homo sapiens (Human), this protein is Probable tRNA (uracil-O(2)-)-methyltransferase (TRMT44).